A 151-amino-acid polypeptide reads, in one-letter code: Putative membrane protein ORF10 (151 aa).

2 consecutive transmembrane segments (helical) span residues leucine 7–valine 23 and glycine 107–tyrosine 123.

It localises to the membrane. In Ictalurid herpesvirus 1 (strain Auburn) (IcHV-1), this protein is Putative membrane protein ORF10 (ORF10).